The following is a 236-amino-acid chain: tRNA (guanine-N(7)-)-methyltransferase (236 aa).

Residues glutamate 43, aspartate 68, asparagine 102, and asparagine 125 each contribute to the S-adenosyl-L-methionine site. 2 residues coordinate substrate: lysine 129 and aspartate 161.

This sequence belongs to the class I-like SAM-binding methyltransferase superfamily. TrmB family.

It carries out the reaction guanosine(46) in tRNA + S-adenosyl-L-methionine = N(7)-methylguanosine(46) in tRNA + S-adenosyl-L-homocysteine. Its pathway is tRNA modification; N(7)-methylguanine-tRNA biosynthesis. In terms of biological role, catalyzes the formation of N(7)-methylguanine at position 46 (m7G46) in tRNA. The chain is tRNA (guanine-N(7)-)-methyltransferase from Ruminiclostridium cellulolyticum (strain ATCC 35319 / DSM 5812 / JCM 6584 / H10) (Clostridium cellulolyticum).